We begin with the raw amino-acid sequence, 549 residues long: Probable protein kinase UbiB (549 aa).

The Protein kinase domain maps to Asp123–Leu501. ATP contacts are provided by residues Leu129–Val137 and Lys152. Asp287 serves as the catalytic Proton acceptor. Helical transmembrane passes span Ser498 to Gln518 and Ala520 to Trp540.

Belongs to the ABC1 family. UbiB subfamily.

It localises to the cell inner membrane. It participates in cofactor biosynthesis; ubiquinone biosynthesis [regulation]. Its function is as follows. Is probably a protein kinase regulator of UbiI activity which is involved in aerobic coenzyme Q (ubiquinone) biosynthesis. The chain is Probable protein kinase UbiB from Shewanella oneidensis (strain ATCC 700550 / JCM 31522 / CIP 106686 / LMG 19005 / NCIMB 14063 / MR-1).